The following is a 374-amino-acid chain: Putative glutamate--cysteine ligase 2 (374 aa).

This sequence belongs to the glutamate--cysteine ligase type 2 family. YbdK subfamily.

It carries out the reaction L-cysteine + L-glutamate + ATP = gamma-L-glutamyl-L-cysteine + ADP + phosphate + H(+). In terms of biological role, ATP-dependent carboxylate-amine ligase which exhibits weak glutamate--cysteine ligase activity. In Leptothrix cholodnii (strain ATCC 51168 / LMG 8142 / SP-6) (Leptothrix discophora (strain SP-6)), this protein is Putative glutamate--cysteine ligase 2.